The chain runs to 159 residues: Anaerobic nitrite reductase HB2 (159 aa).

Positions 2–152 constitute a Globin domain; it reads GFTEKQEGLV…LAEAIKAEMK (151 aa). A Homodimerization motif is present at residues 35 to 39; that stretch reads EIAPG. Residues serine 45, lysine 59, histidine 63, and histidine 98 each contribute to the heme b site. The Homodimerization signature appears at 105-117; sequence DPHFEVVKEALLR.

It belongs to the plant globin family. Homodimer. It depends on heme b as a cofactor.

The protein resides in the cytoplasm. Its subcellular location is the nucleus. The enzyme catalyses Fe(III)-heme b-[protein] + nitric oxide + H2O = Fe(II)-heme b-[protein] + nitrite + 2 H(+). Functionally, phytoglobin that reduces nitrite to nitric oxide (NO) under anoxic conditions (e.g. during flooding or in waterlogged soil). May not function as an oxygen storage or transport protein. Has an unusually high affinity for O(2) through an hexacoordinate heme iron because of a very low dissociation constant. The chain is Anaerobic nitrite reductase HB2 from Gossypium hirsutum (Upland cotton).